We begin with the raw amino-acid sequence, 1052 residues long: MLEKIIRFSLKHRWFVLLFTLVIAILGVYNFQRLPIDAVPDITNVQVQINTQASGYSPFEVEQRITFPIELAMSGLPSLDYTRSLSRYGLSQVTVVFKDGTNIYFARQLINERLQEVKDKLPPGVETTLGPISTGLGEIFMYTVTNKPNVPISQHYNPTELRTIQDWIIKPQLRNVEGVAEVNTIGGYEKQFHITPDPSKLVRYRLSLNDVVEALERNNANVGAGYIETNGEQNLIRVPGQVQNMADIENIVIASFEGTPVRIRDVAEVALGKELRTGAATENSKEVVLGTVFILMGENSRTVSERVAAKMKDINKTLPEGVEAITVYNRTTLVNATINTVKNNLLEGALLVCVILFLFLGNIRAALITAMVIPLSMLLTITGMVENQISANLMSLGALDFGLIVDGAVIIVENCIKHLAEQQHALHRVLNLEERLKVISYATTEVIRPSIFGVFIITVVYLPILTLTGVEGKMFLPMAQTVIIALLASMLFALTFVPAAVAIFLRGHLQEKENWLVHYLSLGYAKVLRRCFHARRVVISAAVALVVVSLGIAFHLGGEFIPSLDEGDIAMHAMRIPGTSLTQAITMQDLVEKRIRQFSEVKNVFAKLGTAEVATDPMPPNVADTFIILKSRKKWTNPKKTKPGLVQEIESAVQQIPGNNYEFTQPIQMRFNELISGVRSDVAVKVFGDDMDTLLKTAEAISAQLKQVPGAADVKVEQVSGLPLLTVEINRDVLARYGLQIGTVQEAVVIATGGKKGGELFEGDKRFDIVVRLPESLRSDPNVLRQIFIPLPLSKDGEQHFIPLSEVASLIRSESPNQISRENGKRRVVVTANVRNRDLSSFVSEAKKRIDGQVKLPSGYWITWGGQFEQLQSAYQRLQIVVPITLLGIFLLLFISFGKVRDALLVFTGIPLALTGGVFALWLRGIPLSISAGVGFIALSGVAVLNGLVMITFINKLREQKKVYLKDAVLQGSLARLRPVLMTALVASLGFVPMALATGTGSEVQRPLATVVIGGIISSTFLTLLVLPGLYYVFHGRRKKGQSKSEPQEQIM.

13 consecutive transmembrane segments (helical) span residues 14-34 (WFVLLFTLVIAILGVYNFQRL), 121-141 (LPPGVETTLGPISTGLGEIFM), 348-368 (GALLVCVILFLFLGNIRAALI), 369-389 (TAMVIPLSMLLTITGMVENQI), 393-413 (LMSLGALDFGLIVDGAVIIVE), 450-470 (SIFGVFIITVVYLPILTLTGV), 483-503 (IIALLASMLFALTFVPAAVAI), 537-557 (VVISAAVALVVVSLGIAFHLG), 878-898 (LQIVVPITLLGIFLLLFISFG), 903-923 (ALLVFTGIPLALTGGVFALWL), 934-954 (VGFIALSGVAVLNGLVMITFI), 979-999 (PVLMTALVASLGFVPMALATG), and 1011-1031 (VVIGGIISSTFLTLLVLPGLY).

It belongs to the resistance-nodulation-cell division (RND) (TC 2.A.6) family.

It localises to the cell inner membrane. Functionally, presumed to function with HelC and HelB in efflux of an unidentified substrate. This chain is Protein HelA (helA), found in Legionella pneumophila.